Consider the following 334-residue polypeptide: DNA-directed RNA polymerase subunit alpha (334 aa).

Positions 1-234 (MQTKVNELLK…SQLAAFVELQ (234 aa)) are alpha N-terminal domain (alpha-NTD). The segment at 248-334 (IDPILLRPVD…LKDQDKKASG (87 aa)) is alpha C-terminal domain (alpha-CTD).

Belongs to the RNA polymerase alpha chain family. In terms of assembly, homodimer. The RNAP catalytic core consists of 2 alpha, 1 beta, 1 beta' and 1 omega subunit. When a sigma factor is associated with the core the holoenzyme is formed, which can initiate transcription.

It catalyses the reaction RNA(n) + a ribonucleoside 5'-triphosphate = RNA(n+1) + diphosphate. Functionally, DNA-dependent RNA polymerase catalyzes the transcription of DNA into RNA using the four ribonucleoside triphosphates as substrates. The sequence is that of DNA-directed RNA polymerase subunit alpha from Thioalkalivibrio sulfidiphilus (strain HL-EbGR7).